The following is a 510-amino-acid chain: RNA-splicing ligase RtcB homolog (510 aa).

The Mn(2+) site is built by Asp124, Cys127, His232, His264, and His358. 231–235 is a binding site for GMP; it reads NHYAE. GMP is bound by residues 358-359, 407-410, Ser414, 433-436, and Lys509; these read HN, GGTM, and HGAG. The active-site GMP-histidine intermediate is His433.

The protein belongs to the RtcB family. Catalytic component of the tRNA-splicing ligase complex. The cofactor is Mn(2+).

The enzyme catalyses a 3'-end 3'-phospho-ribonucleotide-RNA + a 5'-end dephospho-ribonucleoside-RNA + GTP = a ribonucleotidyl-ribonucleotide-RNA + GMP + diphosphate. The catalysed reaction is a 3'-end 2',3'-cyclophospho-ribonucleotide-RNA + a 5'-end dephospho-ribonucleoside-RNA + GTP + H2O = a ribonucleotidyl-ribonucleotide-RNA + GMP + diphosphate + H(+). In terms of biological role, catalytic subunit of the tRNA-splicing ligase complex that acts by directly joining spliced tRNA halves to mature-sized tRNAs by incorporating the precursor-derived splice junction phosphate into the mature tRNA as a canonical 3',5'-phosphodiester. May act as an RNA ligase with broad substrate specificity, and may function toward other RNAs. This chain is RNA-splicing ligase RtcB homolog, found in Trichoplax adhaerens (Trichoplax reptans).